The following is a 299-amino-acid chain: Coenzyme PQQ synthesis protein B (299 aa).

Belongs to the PqqB family.

It participates in cofactor biosynthesis; pyrroloquinoline quinone biosynthesis. Functionally, may be involved in the transport of PQQ or its precursor to the periplasm. The sequence is that of Coenzyme PQQ synthesis protein B from Xanthomonas axonopodis pv. citri (strain 306).